The chain runs to 299 residues: Deoxyribonuclease-1-like 2 (299 aa).

Positions 1–20 (MGGPRALLAALWALEAAGTA) are cleaved as a signal peptide. Catalysis depends on residues Glu-99 and His-170. Cys-209 and Cys-245 are oxidised to a cystine.

The protein belongs to the DNase I family. The cofactor is Mg(2+). Requires Ca(2+) as cofactor. In terms of tissue distribution, preferentially expressed in the skin and up-regulated during keratinocytes differentiation. Highly abundant (at protein level) in the stratum granulosum.

The protein localises to the cytoplasm. The protein resides in the secreted. Divalent cation-dependent acid DNA endonuclease involved in the breakdown of the nucleus during corneocyte formation of epidermal keratinocytes. May play an immune role by eliminating harmful DNA released into the extracellular environment by damaged epidermal cells. The protein is Deoxyribonuclease-1-like 2 (DNASE1L2) of Homo sapiens (Human).